A 214-amino-acid chain; its full sequence is Holliday junction branch migration complex subunit RuvA (214 aa).

Positions 1–67 (MVGWLKGLIV…ADNWQFFGFK (67 aa)) are domain I. Residues 68–146 (STQERDIFRE…AFAGMDPAPS (79 aa)) are domain II. Positions 147 to 154 (LAEGVSSE) are flexible linker. A domain III region spans residues 155–214 (QMPESGADVEATLSMLGYDDLEVRRAIRAIAEGSDGPPPPGDDQDAWLRGCLQWLSRDSA).

The protein belongs to the RuvA family. As to quaternary structure, homotetramer. Forms an RuvA(8)-RuvB(12)-Holliday junction (HJ) complex. HJ DNA is sandwiched between 2 RuvA tetramers; dsDNA enters through RuvA and exits via RuvB. An RuvB hexamer assembles on each DNA strand where it exits the tetramer. Each RuvB hexamer is contacted by two RuvA subunits (via domain III) on 2 adjacent RuvB subunits; this complex drives branch migration. In the full resolvosome a probable DNA-RuvA(4)-RuvB(12)-RuvC(2) complex forms which resolves the HJ.

It is found in the cytoplasm. Its function is as follows. The RuvA-RuvB-RuvC complex processes Holliday junction (HJ) DNA during genetic recombination and DNA repair, while the RuvA-RuvB complex plays an important role in the rescue of blocked DNA replication forks via replication fork reversal (RFR). RuvA specifically binds to HJ cruciform DNA, conferring on it an open structure. The RuvB hexamer acts as an ATP-dependent pump, pulling dsDNA into and through the RuvAB complex. HJ branch migration allows RuvC to scan DNA until it finds its consensus sequence, where it cleaves and resolves the cruciform DNA. This Synechococcus sp. (strain CC9605) protein is Holliday junction branch migration complex subunit RuvA.